Consider the following 161-residue polypeptide: Peptidyl-prolyl cis-trans isomerase-like 1 (161 aa).

Positions 1-155 (MATDVAFDTS…DEVKIIRARV (155 aa)) constitute a PPIase cyclophilin-type domain.

The protein belongs to the cyclophilin-type PPIase family. PPIL1 subfamily.

It catalyses the reaction [protein]-peptidylproline (omega=180) = [protein]-peptidylproline (omega=0). PPIases accelerate the folding of proteins. It catalyzes the cis-trans isomerization of proline imidic peptide bonds in oligopeptides. The sequence is that of Peptidyl-prolyl cis-trans isomerase-like 1 (cyp1) from Aspergillus oryzae (strain ATCC 42149 / RIB 40) (Yellow koji mold).